The following is an 83-amino-acid chain: MALMITDECINCDVCEPECPNGAISQGDETYVIEPSLCTECVGHYETSQCVEVCPVDCIIKDPSHEETEDELRAKYERITGEG.

4Fe-4S ferredoxin-type domains follow at residues 2-29 and 31-64; these read ALMI…QGDE and YVIE…KDPS. Positions 9, 12, 15, 19, 38, 41, 50, and 54 each coordinate [4Fe-4S] cluster.

[4Fe-4S] cluster serves as cofactor.

Its function is as follows. Ferredoxins are iron-sulfur proteins that transfer electrons in a wide variety of metabolic reactions. The polypeptide is Ferredoxin (fdx) (Allochromatium vinosum (strain ATCC 17899 / DSM 180 / NBRC 103801 / NCIMB 10441 / D) (Chromatium vinosum)).